Here is a 438-residue protein sequence, read N- to C-terminus: Thymidine phosphorylase (438 aa).

Belongs to the thymidine/pyrimidine-nucleoside phosphorylase family. In terms of assembly, homodimer.

The catalysed reaction is thymidine + phosphate = 2-deoxy-alpha-D-ribose 1-phosphate + thymine. It functions in the pathway pyrimidine metabolism; dTMP biosynthesis via salvage pathway; dTMP from thymine: step 1/2. In terms of biological role, the enzymes which catalyze the reversible phosphorolysis of pyrimidine nucleosides are involved in the degradation of these compounds and in their utilization as carbon and energy sources, or in the rescue of pyrimidine bases for nucleotide synthesis. The polypeptide is Thymidine phosphorylase (Sinorhizobium fredii (strain NBRC 101917 / NGR234)).